The following is a 266-amino-acid chain: L-cystine-binding protein TcyJ (266 aa).

A signal peptide spans 1–29 (MKLAHLGRQALMGVMAVALVAGMSVKSFA).

This sequence belongs to the bacterial solute-binding protein 3 family. In terms of assembly, the complex is composed of two ATP-binding proteins (TcyN), two transmembrane proteins (TcyL) and a solute-binding protein (TcyJ).

The protein resides in the periplasm. Its function is as follows. Part of the ABC transporter complex TcyJLN involved in L-cystine import. Binds cystine. This chain is L-cystine-binding protein TcyJ, found in Escherichia coli O6:H1 (strain CFT073 / ATCC 700928 / UPEC).